We begin with the raw amino-acid sequence, 40 residues long: Photosystem II reaction center protein J (40 aa).

The chain crosses the membrane as a helical span at residues Ile-8–Phe-28.

The protein belongs to the PsbJ family. As to quaternary structure, PSII is composed of 1 copy each of membrane proteins PsbA, PsbB, PsbC, PsbD, PsbE, PsbF, PsbH, PsbI, PsbJ, PsbK, PsbL, PsbM, PsbT, PsbX, PsbY, PsbZ, Psb30/Ycf12, at least 3 peripheral proteins of the oxygen-evolving complex and a large number of cofactors. It forms dimeric complexes.

The protein resides in the plastid. Its subcellular location is the chloroplast thylakoid membrane. Functionally, one of the components of the core complex of photosystem II (PSII). PSII is a light-driven water:plastoquinone oxidoreductase that uses light energy to abstract electrons from H(2)O, generating O(2) and a proton gradient subsequently used for ATP formation. It consists of a core antenna complex that captures photons, and an electron transfer chain that converts photonic excitation into a charge separation. This chain is Photosystem II reaction center protein J, found in Oenothera elata subsp. hookeri (Hooker's evening primrose).